We begin with the raw amino-acid sequence, 892 residues long: Microsomal triglyceride transfer protein homolog (892 aa).

The signal sequence occupies residues 1-19; that stretch reads MFSSRIWLLLAVTVGVCLA.

Heterodimer; heterodimerizes with protein disulfide isomerase.

It localises to the endoplasmic reticulum. Functionally, catalyzes the transport of cholesteryl ester, and phospholipid between phospholipid surfaces. Does not catalyze transport of triglycerides. Required for the assembly and secretion of plasma lipoproteins that contain apolipoprotein B. Required for normal expression of klf-3. This chain is Microsomal triglyceride transfer protein homolog, found in Caenorhabditis elegans.